The sequence spans 303 residues: MADKSKFIEYIDEALEKSKETALSHLFFTYQGIPYPITMCTSETFQALDTFEARHDDIVLASYPKCGSNWILHIVSELIYAVSKKKYKYPEFPVLECGDSEKYQRMKGFPSPRILATHLHYDKLPGSIFENKAKILVIFRNPKDTAVSFLHFHNDVPDIPSYGSWDEFFRQFMKGQVSWGRYFDFAINWNKHLDGDNVKFILYEDLKENLAAGIKQIAEFLGFFLTGEQIQTISVQSTFQAMRAKSQDTHGAVGPFLFRKGEVGDWKNLFSEIQNQEMDEKFKECLAGTSLGAKLKYESYCQG.

65–70 contributes to the 3'-phosphoadenylyl sulfate binding site; it reads KCGSNW. The active-site Proton acceptor is histidine 118. Residues arginine 140, serine 148, tyrosine 203, 237–242, and 259–261 each bind 3'-phosphoadenylyl sulfate; these read STFQAM and RKG.

Belongs to the sulfotransferase 1 family. Specifically expressed in kidney and testis.

It is found in the cytoplasm. Its subcellular location is the cytosol. It catalyses the reaction thyroxine + 3'-phosphoadenylyl sulfate = thyroxine sulfate + adenosine 3',5'-bisphosphate + H(+). Sulfotransferase that utilizes 3'-phospho-5'-adenylyl sulfate (PAPS) as sulfonate donor to catalyze the sulfate conjugation of thyroxine. Involved in the metabolism of thyroxine. This is Sulfotransferase 6B1 (SULT6B1) from Homo sapiens (Human).